Here is a 669-residue protein sequence, read N- to C-terminus: DNA ligase (669 aa).

Residues 34-38 (DAEYD), 83-84 (SL), and glutamate 114 each bind NAD(+). Lysine 116 (N6-AMP-lysine intermediate) is an active-site residue. 4 residues coordinate NAD(+): arginine 137, glutamate 171, lysine 287, and lysine 311. Zn(2+)-binding residues include cysteine 405, cysteine 408, cysteine 423, and cysteine 428. In terms of domain architecture, BRCT spans 591–669 (NVESYFAGKT…EERFLQELNK (79 aa)).

Belongs to the NAD-dependent DNA ligase family. LigA subfamily. Mg(2+) serves as cofactor. It depends on Mn(2+) as a cofactor.

It carries out the reaction NAD(+) + (deoxyribonucleotide)n-3'-hydroxyl + 5'-phospho-(deoxyribonucleotide)m = (deoxyribonucleotide)n+m + AMP + beta-nicotinamide D-nucleotide.. Functionally, DNA ligase that catalyzes the formation of phosphodiester linkages between 5'-phosphoryl and 3'-hydroxyl groups in double-stranded DNA using NAD as a coenzyme and as the energy source for the reaction. It is essential for DNA replication and repair of damaged DNA. The polypeptide is DNA ligase (Bacillus cereus (strain ATCC 14579 / DSM 31 / CCUG 7414 / JCM 2152 / NBRC 15305 / NCIMB 9373 / NCTC 2599 / NRRL B-3711)).